We begin with the raw amino-acid sequence, 369 residues long: Putative 2-aminoethylphosphonate import ATP-binding protein PhnT (369 aa).

In terms of domain architecture, ABC transporter spans 19–250; it reads IVLDSLRVAY…PPNRFAAEFL (232 aa). Residue 51–58 participates in ATP binding; the sequence is GPSGSGKT.

This sequence belongs to the ABC transporter superfamily. 2-aminoethylphosphonate importer (TC 3.A.1.11.5) family.

Its subcellular location is the cell inner membrane. Probably part of the PhnSTUV complex (TC 3.A.1.11.5) involved in 2-aminoethylphosphonate import. Probably responsible for energy coupling to the transport system. The sequence is that of Putative 2-aminoethylphosphonate import ATP-binding protein PhnT (phnT) from Salmonella typhimurium (strain LT2 / SGSC1412 / ATCC 700720).